The following is a 451-amino-acid chain: Trigger factor (451 aa).

Residues 165–250 (DDKLTIDFEG…LRQIQVREAL (86 aa)) enclose the PPIase FKBP-type domain.

This sequence belongs to the FKBP-type PPIase family. Tig subfamily.

It localises to the cytoplasm. The enzyme catalyses [protein]-peptidylproline (omega=180) = [protein]-peptidylproline (omega=0). Its function is as follows. Involved in protein export. Acts as a chaperone by maintaining the newly synthesized protein in an open conformation. Functions as a peptidyl-prolyl cis-trans isomerase. This chain is Trigger factor (tig), found in Helicobacter pylori (strain J99 / ATCC 700824) (Campylobacter pylori J99).